Here is a 479-residue protein sequence, read N- to C-terminus: MELGKTKSVHIVGVGGAGMSAIAELLLKSGFRVTGSDLSSGEVTEKLAEHGAIIYKGHRAEQVAGSDVVVYSSAIRAEDNIELIAAEKAGIPVIKRDEMLGELMRYTYGICIAGTHGKTTTTAMIATMLIESDESPTVMIGGISDYLKGSTVVGEGKYMVIEADEYDRAFLKLTPTIAVVNSLESEHMDTYGTLDELKEAFVAFANKVPFYGRVICCVDWPEIRKIMPKMNRLCTTFGIDEPADVMAFDIVLDNQHTTFSIKAFGQEYRDVSLQVPGRHNVLNALAAFSTGLELGILPERLIAGLGRYSGMRRRFQVKYDNGHGLMVVDDYAHHPTEVKATVRAAKSGWRDSRIVAVFQPHLFSRTREFAHEYGWALSHADMVYVADIYPAREKGVDYPGVDGELIADAVRKAGGKHVEFVADMQNLFTALKEWSVNGNMLLFMGAGDITHLATRVANFCREGVAVQGNEDSQSGFAAS.

114–120 (GTHGKTT) is a binding site for ATP.

It belongs to the MurCDEF family.

It localises to the cytoplasm. It catalyses the reaction UDP-N-acetyl-alpha-D-muramate + L-alanine + ATP = UDP-N-acetyl-alpha-D-muramoyl-L-alanine + ADP + phosphate + H(+). The protein operates within cell wall biogenesis; peptidoglycan biosynthesis. Functionally, cell wall formation. The sequence is that of UDP-N-acetylmuramate--L-alanine ligase from Pelodictyon phaeoclathratiforme (strain DSM 5477 / BU-1).